Consider the following 179-residue polypeptide: Endoribonuclease YbeY (179 aa).

Zn(2+) contacts are provided by H148, H152, and H158.

Belongs to the endoribonuclease YbeY family. It depends on Zn(2+) as a cofactor.

The protein resides in the cytoplasm. In terms of biological role, single strand-specific metallo-endoribonuclease involved in late-stage 70S ribosome quality control and in maturation of the 3' terminus of the 16S rRNA. The polypeptide is Endoribonuclease YbeY (Prochlorococcus marinus (strain MIT 9215)).